The sequence spans 122 residues: Large ribosomal subunit protein uL14 (122 aa).

The protein belongs to the universal ribosomal protein uL14 family. As to quaternary structure, part of the 50S ribosomal subunit. Forms a cluster with proteins L3 and L19. In the 70S ribosome, L14 and L19 interact and together make contacts with the 16S rRNA in bridges B5 and B8.

Functionally, binds to 23S rRNA. Forms part of two intersubunit bridges in the 70S ribosome. The sequence is that of Large ribosomal subunit protein uL14 from Thioalkalivibrio sulfidiphilus (strain HL-EbGR7).